The chain runs to 638 residues: tRNA uridine 5-carboxymethylaminomethyl modification enzyme MnmG (638 aa).

Residues 13–18 (GGGHAG), valine 125, and serine 180 contribute to the FAD site. Residue 273-287 (GPRYCPSIEDKIHRF) participates in NAD(+) binding. Residue glutamine 370 participates in FAD binding.

The protein belongs to the MnmG family. Homodimer. Heterotetramer of two MnmE and two MnmG subunits. The cofactor is FAD.

It is found in the cytoplasm. Functionally, NAD-binding protein involved in the addition of a carboxymethylaminomethyl (cmnm) group at the wobble position (U34) of certain tRNAs, forming tRNA-cmnm(5)s(2)U34. This chain is tRNA uridine 5-carboxymethylaminomethyl modification enzyme MnmG, found in Cellvibrio japonicus (strain Ueda107) (Pseudomonas fluorescens subsp. cellulosa).